The sequence spans 229 residues: Cytochrome c oxidase subunit 2 (229 aa).

Over Met1–His26 the chain is Mitochondrial intermembrane. A helical transmembrane segment spans residues Ala27–Asn48. At Ser49–Glu62 the chain is on the mitochondrial matrix side. Residues Met63 to Arg82 traverse the membrane as a helical segment. Residues Leu83–Ser229 lie on the Mitochondrial intermembrane side of the membrane. Residues His161, Cys196, Glu198, Cys200, His204, and Met207 each contribute to the Cu cation site. Glu198 lines the Mg(2+) pocket.

Belongs to the cytochrome c oxidase subunit 2 family. In terms of assembly, component of the cytochrome c oxidase (complex IV, CIV), a multisubunit enzyme composed of a catalytic core of 3 subunits and several supernumerary subunits. The complex exists as a monomer or a dimer and forms supercomplexes (SCs) in the inner mitochondrial membrane with ubiquinol-cytochrome c oxidoreductase (cytochrome b-c1 complex, complex III, CIII). The cofactor is Cu cation.

Its subcellular location is the mitochondrion inner membrane. The catalysed reaction is 4 Fe(II)-[cytochrome c] + O2 + 8 H(+)(in) = 4 Fe(III)-[cytochrome c] + 2 H2O + 4 H(+)(out). Component of the cytochrome c oxidase, the last enzyme in the mitochondrial electron transport chain which drives oxidative phosphorylation. The respiratory chain contains 3 multisubunit complexes succinate dehydrogenase (complex II, CII), ubiquinol-cytochrome c oxidoreductase (cytochrome b-c1 complex, complex III, CIII) and cytochrome c oxidase (complex IV, CIV), that cooperate to transfer electrons derived from NADH and succinate to molecular oxygen, creating an electrochemical gradient over the inner membrane that drives transmembrane transport and the ATP synthase. Cytochrome c oxidase is the component of the respiratory chain that catalyzes the reduction of oxygen to water. Electrons originating from reduced cytochrome c in the intermembrane space (IMS) are transferred via the dinuclear copper A center (CU(A)) of subunit 2 and heme A of subunit 1 to the active site in subunit 1, a binuclear center (BNC) formed by heme A3 and copper B (CU(B)). The BNC reduces molecular oxygen to 2 water molecules using 4 electrons from cytochrome c in the IMS and 4 protons from the mitochondrial matrix. The protein is Cytochrome c oxidase subunit 2 (mt:CoII) of Drosophila affinis (Fruit fly).